The sequence spans 848 residues: Protein SEY1 (848 aa).

Residues 1 to 733 (MNGNFAAVGS…KRGALGGMTQ (733 aa)) lie on the Cytoplasmic side of the membrane. The region spanning 47–277 (GFNYHLISVF…FVGGVFLPEY (231 aa)) is the GB1/RHD3-type G domain. 57-64 (GSQSTGKS) is a binding site for GTP. The chain crosses the membrane as a helical span at residues 734–754 (VPLYFWIALFAFGWNEIWMVI). Over 755-757 (RNP) the chain is Lumenal. The helical transmembrane segment at 758 to 778 (FLFILLLLSAGGTYVAYNLSL) threads the bilayer. Residues 779–848 (LGPMMQMTNA…KKKDYDDDGI (70 aa)) lie on the Cytoplasmic side of the membrane. A disordered region spans residues 815-848 (LAMPASSKSSGGEQVRMDTLDSKGKKKDYDDDGI). Positions 829–848 (VRMDTLDSKGKKKDYDDDGI) are enriched in basic and acidic residues.

The protein belongs to the TRAFAC class dynamin-like GTPase superfamily. GB1/RHD3 GTPase family. RHD3 subfamily.

Its subcellular location is the endoplasmic reticulum membrane. Cooperates with the reticulon proteins and tubule-shaping DP1 family proteins to generate and maintain the structure of the tubular endoplasmic reticulum network. Has GTPase activity, which is required for its function in ER organization. This chain is Protein SEY1, found in Pyricularia oryzae (strain 70-15 / ATCC MYA-4617 / FGSC 8958) (Rice blast fungus).